Consider the following 60-residue polypeptide: Putative transcriptional regulator XtpA (60 aa).

Its function is as follows. Controls the expression of small non-coding RNA GcvB, which represses the expression of many amino acid transporter proteins and uptake of aminoglycoside antibiotics in cells. Might be a transcriptional activator. An RNA (xtr) with a tRNA-like fold possibly derived from tRNA-Arg(UCG) is encoded entirely within the protein; xtr does not have the sequence corresponding to tRNA anticodon or variable arms. 10 synonymous codon changes in the xtr region of xtpA have the same phenotype as a deletion mutation, suggesting the mRNA secondary structure is important for function. This chain is Putative transcriptional regulator XtpA, found in Escherichia coli (strain K12).